A 1468-amino-acid polypeptide reads, in one-letter code: Centrosomal protein of 290 kDa (1468 aa).

Coiled-coil stretches lie at residues 1-25 (ERQL…VGEK), 52-121 (SLSE…IEQA), 172-292 (KMYE…DEKA), 318-528 (VASK…EAQK), 559-592 (RIIL…ILSR), 627-688 (HTLK…QADN), and 736-1441 (IKLK…SEQF). Residues 1060-1468 (TTGLTVDQVM…QENPVNFPIY (409 aa)) form a self-association (with itself or N-terminus) region. The segment at 1130–1152 (LSKDAYSRPSTSGIDSDDHYQRE) is disordered.

As to quaternary structure, part of the tectonic-like complex (also named B9 complex). Interacts with ATF4 via its N-terminal region. Associates with the BBSome complex, interacting (via N-terminus) with BBS4. Interacts with IQCB1/NPHP5; IQCB1 and CEP290/NPHP6 are proposed to form a functional NPHP5-6 module localized to the centrosome. Interacts with NPHP4; the interaction likely requires additional interactors. Interacts with ZNF423, FAM161A, CEP162, CEP162, CEP131, TALPID3, CCDC13, CC2D2A, RPGRIP1. Can self-associate (homo- or heteromeric). Interacts with CCP110; required for suppressing cilia formation. Interacts with RPGR. Associates (via C-terminus) with microtubules; association to microtubule is reduced in response to cellular stress, such as ultraviolet light (UV) radiation or heat shock, in a process that requires p38 MAP kinase signaling. Interacts with FAM161A. Interacts with PCM1. Interacts with CCDC66. Interacts with ARMC9 and CSPP1. In terms of processing, ubiquitinated. May undergo monoubiquitination; monoubiquitination is inhibited in response to cellular stress, such as ultraviolet light (UV) radiation or heat shock, but does not cause its displacement from centriolar satellites.

It localises to the cytoplasm. The protein localises to the cytoskeleton. It is found in the microtubule organizing center. Its subcellular location is the centrosome. The protein resides in the centriolar satellite. It localises to the nucleus. The protein localises to the cell projection. It is found in the cilium. Its subcellular location is the cilium basal body. The protein resides in the centriole. It localises to the cytoplasmic vesicle. In terms of biological role, involved in early and late steps in cilia formation. Its association with CCP110 is required for inhibition of primary cilia formation by CCP110. May play a role in early ciliogenesis in the disappearance of centriolar satellites and in the transition of primary ciliar vesicles (PCVs) to capped ciliary vesicles (CCVs). Required for the centrosomal recruitment of RAB8A and for the targeting of centriole satellite proteins to centrosomes such as of PCM1. Required for the correct localization of ciliary and phototransduction proteins in retinal photoreceptor cells; may play a role in ciliary transport processes. Required for efficient recruitment of RAB8A to primary cilium. In the ciliary transition zone is part of the tectonic-like complex which is required for tissue-specific ciliogenesis and may regulate ciliary membrane composition. Involved in regulation of the BBSome complex integrity, specifically for presence of BBS2, BBS5 and BBS8/TTC8 in the complex, and in ciliary targeting of selected BBSome cargos. May play a role in controlling entry of the BBSome complex to cilia possibly implicating IQCB1/NPHP5. Activates ATF4-mediated transcription. This is Centrosomal protein of 290 kDa (CEP290) from Bos taurus (Bovine).